The sequence spans 288 residues: Hydroxyethylthiazole kinase (288 aa).

Met-55 contributes to the substrate binding site. The ATP site is built by Asn-131 and Ser-177. Gly-204 contacts substrate.

This sequence belongs to the Thz kinase family. Mg(2+) is required as a cofactor.

It catalyses the reaction 5-(2-hydroxyethyl)-4-methylthiazole + ATP = 4-methyl-5-(2-phosphooxyethyl)-thiazole + ADP + H(+). It functions in the pathway cofactor biosynthesis; thiamine diphosphate biosynthesis; 4-methyl-5-(2-phosphoethyl)-thiazole from 5-(2-hydroxyethyl)-4-methylthiazole: step 1/1. Catalyzes the phosphorylation of the hydroxyl group of 4-methyl-5-beta-hydroxyethylthiazole (THZ). This is Hydroxyethylthiazole kinase from Haloquadratum walsbyi (strain DSM 16790 / HBSQ001).